The following is a 1331-amino-acid chain: Serine/threonine-protein kinase SSK22 (1331 aa).

One can recognise a Protein kinase domain in the interval 1034-1310 (WQKRSFIGGG…AVELLIDPWM (277 aa)). Residues 1040 to 1048 (IGGGTFGQV) and Lys1063 contribute to the ATP site. Residue Asp1158 is the Proton acceptor of the active site.

Belongs to the protein kinase superfamily. STE Ser/Thr protein kinase family. MAP kinase kinase kinase subfamily. As to quaternary structure, interacts with by SSK1.

The catalysed reaction is L-seryl-[protein] + ATP = O-phospho-L-seryl-[protein] + ADP + H(+). The enzyme catalyses L-threonyl-[protein] + ATP = O-phospho-L-threonyl-[protein] + ADP + H(+). Functionally, kinase involved in a signal transduction pathway that is activated by changes in the osmolarity of the extracellular environment. Activates the PBS2 MAP kinase kinase by phosphorylation. This is Serine/threonine-protein kinase SSK22 (SSK22) from Saccharomyces cerevisiae (strain ATCC 204508 / S288c) (Baker's yeast).